We begin with the raw amino-acid sequence, 133 residues long: MANHDPISDMLTRIRNASEKRHETTKVPASRMTRSIAKVLQQEGFISEINEEGEGFRAELVLSLKYSGKHRLPTIRSMQRVSKPGLRIYKNTRGLPKVLGGLGVAIISTSKGVMSDRDARREGVGGEVLCYVY.

The segment at Met-1–Ser-30 is disordered. Residues Asn-16–Thr-25 are compositionally biased toward basic and acidic residues.

Belongs to the universal ribosomal protein uS8 family. In terms of assembly, part of the 30S ribosomal subunit. Contacts proteins S5 and S12.

One of the primary rRNA binding proteins, it binds directly to 16S rRNA central domain where it helps coordinate assembly of the platform of the 30S subunit. The sequence is that of Small ribosomal subunit protein uS8 from Synechococcus sp. (strain CC9902).